Reading from the N-terminus, the 384-residue chain is WD repeat-containing protein 55 (384 aa).

A disordered region spans residues 1–33 (MDPTCQESPAEDSNNEEDLDSTKAAPRIRDTPE). Acidic residues predominate over residues 9 to 19 (PAEDSNNEEDL). WD repeat units lie at residues 36–75 (VLEA…GETK), 82–121 (HHLK…LERR), 125–163 (AHSA…PLMD), 166–205 (QHEE…FELL), 208–247 (PQSG…ATSD), 250–289 (ALRA…VVGT), and 293–332 (HAGE…TVVV). Ser354 and Ser383 each carry phosphoserine. Positions 362-384 (LREDEEEAKAPEEVSGESDDDSD) are disordered. Residues 375–384 (VSGESDDDSD) are compositionally biased toward acidic residues.

This sequence belongs to the WD repeat WDR55 family.

Its subcellular location is the nucleus. It is found in the nucleolus. It localises to the cytoplasm. Functionally, nucleolar protein that acts as a modulator of rRNA synthesis. Plays a central role during organogenesis. This Rattus norvegicus (Rat) protein is WD repeat-containing protein 55 (Wdr55).